The primary structure comprises 489 residues: uncharacterized protein (489 aa).

Residues 2–84 (IKITVKRFNG…GMIIEPLRGF (83 aa)) form the 2Fe-2S ferredoxin-type domain. [2Fe-2S] cluster contacts are provided by C48, C53, C56, and C68. 4Fe-4S ferredoxin-type domains follow at residues 123-155 (KYVE…YPGP) and 177-205 (TAYF…IVHR). C134, C137, C140, C144, C186, C189, C192, and C196 together coordinate [4Fe-4S] cluster.

This sequence belongs to the succinate dehydrogenase/fumarate reductase iron-sulfur protein family.

This is an uncharacterized protein from Methanocaldococcus jannaschii (strain ATCC 43067 / DSM 2661 / JAL-1 / JCM 10045 / NBRC 100440) (Methanococcus jannaschii).